Consider the following 92-residue polypeptide: Muscle LIM protein 1 (92 aa).

The region spanning 11–62 (CPACGKSVYAAEERVAGGYKFHKTCFKCSMCNKALDSTNCTEHEKELFCKNC) is the LIM zinc-binding domain. A Nuclear localization signal motif is present at residues 65 to 70 (RKYGPK).

As to expression, in the embryo, expression is restricted to the somatic, visceral, and pharyngeal muscles. Within the somatic musculature, MLP60 is distributed throughout the muscle fibers. There is no expression in cardiac mesoderm or in fat body.

It localises to the cytoplasm. The protein localises to the nucleus. In terms of biological role, positive regulator of myogenesis. The sequence is that of Muscle LIM protein 1 (Mlp60A) from Drosophila melanogaster (Fruit fly).